A 354-amino-acid chain; its full sequence is CREB/ATF bZIP transcription factor (354 aa).

Disordered stretches follow at residues 1-95 (MRHS…PGEE), 113-156 (PRQP…AAEM), and 171-214 (GGCS…RKAA). Residue S50 is modified to Phosphoserine. Over residues 121–132 (DPGLSSPGPLSS) the composition is skewed to low complexity. Composition is skewed to gly residues over residues 133–143 (SGGGSDSGGLW) and 190–199 (PGGGGGGGSG). A bZIP domain is found at 204 to 267 (QAATKSPRKA…QALQEESRYL (64 aa)). The span at 205-214 (AATKSPRKAA) shows a compositional bias: low complexity. The interval 219–226 (RLNRLKKK) is basic motif. Residues 232–267 (LESRVRGLAAENQELRAENRELGKRVQALQEESRYL) are leucine-zipper. The HCFC1-binding motif (HBM) signature appears at 303–306 (DHDY).

It belongs to the bZIP family. ATF subfamily. In terms of assembly, interacts with HCFC1; the interaction inhibits CREB3 transcriptional activity. Interacts with CREB3; the interaction occurs only in combination with HCFC1. In adults, expressed most abundantly in heart, liver and skeletal muscle, moderately abundant in kidney and pancreas, and barely detectable in lung. In fetal tissues, expressed most abundantly in kidney and very low amounts in heart, lung and liver.

Its subcellular location is the nucleus. Functionally, strongly activates transcription when bound to HCFC1. Suppresses the expression of HSV proteins in cells infected with the virus in a HCFC1-dependent manner. Also suppresses the HCFC1-dependent transcriptional activation by CREB3 and reduces the amount of CREB3 in the cell. Able to down-regulate expression of some cellular genes in CREBZF-expressing cells. The protein is CREB/ATF bZIP transcription factor (CREBZF) of Homo sapiens (Human).